The sequence spans 29 residues: NAD(P)H-quinone oxidoreductase subunit 5, chloroplastic (29 aa).

A helical transmembrane segment spans residues 1–15 (SGSIIHSMEANVGYS).

The protein belongs to the complex I subunit 5 family. In terms of assembly, NDH is composed of at least 16 different subunits, 5 of which are encoded in the nucleus.

It is found in the plastid. The protein resides in the chloroplast thylakoid membrane. It carries out the reaction a plastoquinone + NADH + (n+1) H(+)(in) = a plastoquinol + NAD(+) + n H(+)(out). It catalyses the reaction a plastoquinone + NADPH + (n+1) H(+)(in) = a plastoquinol + NADP(+) + n H(+)(out). In terms of biological role, NDH shuttles electrons from NAD(P)H:plastoquinone, via FMN and iron-sulfur (Fe-S) centers, to quinones in the photosynthetic chain and possibly in a chloroplast respiratory chain. The immediate electron acceptor for the enzyme in this species is believed to be plastoquinone. Couples the redox reaction to proton translocation, and thus conserves the redox energy in a proton gradient. This is NAD(P)H-quinone oxidoreductase subunit 5, chloroplastic from Pseudotsuga menziesii (Douglas-fir).